Here is a 391-residue protein sequence, read N- to C-terminus: Immunoglobulin heavy constant alpha 2 (391 aa).

The Extracellular segment spans residues 1–357 (ASPTSPKVFP…TPGANLWPTT (357 aa)). 3 Ig-like domains span residues 6–98 (PKVF…QDVT), 112–207 (PRLS…ANIT), and 215–317 (PEVH…KTID). Cys26 and Cys85 are disulfide-bonded. N-linked (GlcNAc...) asparagine glycosylation occurs at Asn47. Asn92 is a glycosylation site (N-linked (GlcNAc...) (complex) asparagine). 2 cysteine pairs are disulfide-bonded: Cys110–Cys167 and Cys134–Cys191. Asn131 carries N-linked (GlcNAc...) asparagine glycosylation. N-linked (GlcNAc...) (complex) asparagine glycosylation is present at Asn205. Cys237 and Cys300 are disulfide-bonded. Asp327 carries N-linked (GlcNAc...) (complex) asparagine glycosylation. A helical membrane pass occupies residues 358-379 (ITFLTLFLLSLFYSTALTVTSV). At 380–391 (RGPSGKREGPQY) the chain is on the cytoplasmic side.

Immunoglobulins are composed of two identical heavy chains and two identical light chains; disulfide-linked. Monomeric or polymeric. Part of the secretory IgA (sIgA) complex that consists of two, four or five IgA monomers, and two additional non-Ig polypeptides, namely the JCHAIN and the secretory component (the proteolytic product of PIGR).

The protein resides in the secreted. Its subcellular location is the cell membrane. In terms of biological role, constant region of immunoglobulin heavy chains. Immunoglobulins, also known as antibodies, are membrane-bound or secreted glycoproteins produced by B lymphocytes. In the recognition phase of humoral immunity, the membrane-bound immunoglobulins serve as receptors which, upon binding of a specific antigen, trigger the clonal expansion and differentiation of B lymphocytes into immunoglobulins-secreting plasma cells. Secreted immunoglobulins mediate the effector phase of humoral immunity, which results in the elimination of bound antigens. The antigen binding site is formed by the variable domain of one heavy chain, together with that of its associated light chain. Thus, each immunoglobulin has two antigen binding sites with remarkable affinity for a particular antigen. The variable domains are assembled by a process called V-(D)-J rearrangement and can then be subjected to somatic hypermutations which, after exposure to antigen and selection, allow affinity maturation for a particular antigen. Ig alpha is the major immunoglobulin class in body secretions. The polypeptide is Immunoglobulin heavy constant alpha 2 (Homo sapiens (Human)).